A 142-amino-acid chain; its full sequence is Large ribosomal subunit protein uL13 (142 aa).

It belongs to the universal ribosomal protein uL13 family. Part of the 50S ribosomal subunit.

This protein is one of the early assembly proteins of the 50S ribosomal subunit, although it is not seen to bind rRNA by itself. It is important during the early stages of 50S assembly. This chain is Large ribosomal subunit protein uL13, found in Laribacter hongkongensis (strain HLHK9).